A 165-amino-acid chain; its full sequence is MENTRSENEEQPESTLKIDEEQPAVEQSPENQCSEEDQSSEDLSSEEQSSEEEFFPEELLPELLPEMLLSEDRPPQECLSQKNQFEDRIPMEQPPCGVGKHKLEEGSFKERLARIRPQFIGDIHGRNLSNEEMIQAADELEEMKRVRNKLMIMHWKAKRSRPYPI.

The interval methionine 1–histidine 101 is disordered. Acidic residues predominate over residues cysteine 33–leucine 60.

The protein belongs to the TFS-II family. TFA subfamily.

The protein localises to the nucleus. In terms of biological role, may be involved in transcriptional regulation. Modulates various viral and cellular promoters in a promoter context-dependent manner. Does not bind DNA directly. In Mus musculus (Mouse), this protein is Transcription elongation factor A protein-like 1.